A 350-amino-acid polypeptide reads, in one-letter code: Small ribosomal subunit biogenesis GTPase RsgA (350 aa).

Over residues 1-17 the composition is skewed to polar residues; sequence MSKNKLSKGQQRRVNAN. Residues 1–33 are disordered; sequence MSKNKLSKGQQRRVNANHQRRLKTSKEKPDYDD. The region spanning 104-273 is the CP-type G domain; it reads TSVLTRPDFY…VIDSPGVREF (170 aa). Residues 160-163 and 214-222 contribute to the GTP site; these read NKID and GQSGVGKSS. Zn(2+)-binding residues include Cys-297, Cys-302, His-304, and Cys-310.

It belongs to the TRAFAC class YlqF/YawG GTPase family. RsgA subfamily. Monomer. Associates with 30S ribosomal subunit, binds 16S rRNA. Zn(2+) serves as cofactor.

The protein resides in the cytoplasm. Its function is as follows. One of several proteins that assist in the late maturation steps of the functional core of the 30S ribosomal subunit. Helps release RbfA from mature subunits. May play a role in the assembly of ribosomal proteins into the subunit. Circularly permuted GTPase that catalyzes slow GTP hydrolysis, GTPase activity is stimulated by the 30S ribosomal subunit. The sequence is that of Small ribosomal subunit biogenesis GTPase RsgA from Escherichia fergusonii (strain ATCC 35469 / DSM 13698 / CCUG 18766 / IAM 14443 / JCM 21226 / LMG 7866 / NBRC 102419 / NCTC 12128 / CDC 0568-73).